The chain runs to 368 residues: 3-dehydroquinate synthase (368 aa).

NAD(+) is bound by residues 71–76 (DGEAFK), 105–109 (GVVGD), 129–130 (TT), K142, K151, and 169–172 (TLRT). 3 residues coordinate Zn(2+): E184, H247, and H264.

Belongs to the sugar phosphate cyclases superfamily. Dehydroquinate synthase family. Co(2+) serves as cofactor. Requires Zn(2+) as cofactor. The cofactor is NAD(+).

The protein localises to the cytoplasm. It catalyses the reaction 7-phospho-2-dehydro-3-deoxy-D-arabino-heptonate = 3-dehydroquinate + phosphate. Its pathway is metabolic intermediate biosynthesis; chorismate biosynthesis; chorismate from D-erythrose 4-phosphate and phosphoenolpyruvate: step 2/7. Its function is as follows. Catalyzes the conversion of 3-deoxy-D-arabino-heptulosonate 7-phosphate (DAHP) to dehydroquinate (DHQ). This is 3-dehydroquinate synthase from Cupriavidus pinatubonensis (strain JMP 134 / LMG 1197) (Cupriavidus necator (strain JMP 134)).